The chain runs to 142 residues: 2-aminomuconate deaminase (142 aa).

This sequence belongs to the 2-aminomuconate deaminase family. Homotetramer.

The enzyme catalyses (2Z,4E)-2-aminomuconate + H2O = (3E)-2-oxohex-3-enedioate + NH4(+). With respect to regulation, slightly inhibited by Pb(2+), Hg(+) and Cu(2+). In terms of biological role, involved in the modified meta-cleavage pathway for the 2-aminophenol catabolism. Only active toward 2-aminomuconic acid. The sequence is that of 2-aminomuconate deaminase (amnD) from Pseudomonas sp.